The following is a 141-amino-acid chain: Auxin-responsive protein SAUR61 (141 aa).

This sequence belongs to the ARG7 family.

It is found in the cell membrane. In terms of biological role, may promote auxin-stimulated organ elongation, such as hypocotyls, stamen filaments and petals. The polypeptide is Auxin-responsive protein SAUR61 (Arabidopsis thaliana (Mouse-ear cress)).